The sequence spans 84 residues: Small ribosomal subunit protein uS17 (84 aa).

This sequence belongs to the universal ribosomal protein uS17 family. In terms of assembly, part of the 30S ribosomal subunit.

One of the primary rRNA binding proteins, it binds specifically to the 5'-end of 16S ribosomal RNA. The chain is Small ribosomal subunit protein uS17 from Moorella thermoacetica (strain ATCC 39073 / JCM 9320).